Here is an 875-residue protein sequence, read N- to C-terminus: Alanine--tRNA ligase (875 aa).

Residues His-565, His-569, Cys-666, and His-670 each coordinate Zn(2+).

It belongs to the class-II aminoacyl-tRNA synthetase family. Requires Zn(2+) as cofactor.

The protein localises to the cytoplasm. It catalyses the reaction tRNA(Ala) + L-alanine + ATP = L-alanyl-tRNA(Ala) + AMP + diphosphate. Its function is as follows. Catalyzes the attachment of alanine to tRNA(Ala) in a two-step reaction: alanine is first activated by ATP to form Ala-AMP and then transferred to the acceptor end of tRNA(Ala). Also edits incorrectly charged Ser-tRNA(Ala) and Gly-tRNA(Ala) via its editing domain. This chain is Alanine--tRNA ligase, found in Methylibium petroleiphilum (strain ATCC BAA-1232 / LMG 22953 / PM1).